The sequence spans 993 residues: Signal peptide, CUB and EGF-like domain-containing protein 3 (993 aa).

The first 20 residues, 1 to 20 (MGSGRVPGLCLLVLLVHARA), serve as a signal peptide directing secretion. Positions 29 to 69 (DVDECVEGTDNCHIDAICQNTPRSYKCICKSGYTGDGKHCK) constitute an EGF-like 1; calcium-binding domain. 26 disulfide bridges follow: Cys-33/Cys-46, Cys-40/Cys-55, Cys-57/Cys-68, Cys-74/Cys-86, Cys-82/Cys-95, Cys-97/Cys-110, Cys-116/Cys-127, Cys-123/Cys-136, Cys-161/Cys-172, Cys-168/Cys-182, Cys-184/Cys-197, Cys-201/Cys-212, Cys-208/Cys-221, Cys-223/Cys-236, Cys-240/Cys-251, Cys-247/Cys-260, Cys-262/Cys-275, Cys-281/Cys-292, Cys-288/Cys-301, Cys-303/Cys-316, Cys-322/Cys-332, Cys-328/Cys-341, Cys-343/Cys-355, Cys-361/Cys-372, Cys-368/Cys-381, and Cys-383/Cys-397. In terms of domain architecture, EGF-like 2; calcium-binding spans 70–111 (DVDECEREDNAGCVHDCVNIPGNYRCTCYDGFHLAHDGHNCL). The EGF-like 3; calcium-binding domain maps to 112-148 (DVDECAEGNGGCQQSCVNMMGSYECHCREGFFLSDNQ). EGF-like domains follow at residues 157–198 (EGMN…RDCK), 199–237 (LTCN…KTCI), and 238–276 (ETCA…KTCK). Residues 277-317 (DIDECRLNNGGCDHICRNTVGSFECSCKKGYKLLINERNCQ) enclose the EGF-like 7; calcium-binding domain. The EGF-like 8; calcium-binding domain maps to 318–356 (DIDECSFDRTCDHICVNTPGSFQCLCHRGYLLYGITHCG). The EGF-like 9; calcium-binding domain maps to 357 to 398 (DVDECSINRGGCRFGCINTPGSYQCTCPAGQGRLHWNGKDCT). Asn-417, Asn-464, Asn-685, Asn-756, and Asn-785 each carry an N-linked (GlcNAc...) asparagine glycan. Disulfide bonds link Cys-804–Cys-830 and Cys-857–Cys-878. The CUB domain occupies 804–916 (CGGELGEFTG…RGFQIPYVTY (113 aa)).

In terms of assembly, forms homooligomers. Forms heterooligomers with SCUBE1 and SCUBE2. Interacts with TGFBR2 through the CUB domain; this interaction does not affect TGFB1-binding to TGFBR2. Interacts with BMP2, BMP4 and BMP7; the interaction is mediated by the CUB domain. Interacts with BMPR1A, BMPR1B and BMPR2; the interaction with BMPR1A and BMPR1B is BMP2- and BMP4-dependent. N-glycosylated. Post-translationally, proteolytic cleavage produces a CUB-containing C-terminal fragment that retains the ability to bind to TGFBR2. This reaction is catalyzed in vitro by MMP2 and, to a lesser extent, by MMP9. Highly expressed in osteoblasts. In normal lung, mainly expressed in bronchial epithelial cells. Tends to be up-regulated in lung cancer cells.

Its subcellular location is the secreted. It is found in the cell surface. Functionally, is a positive regulator of the BMP signaling pathway, required for proper chondrogenesis, osteogenesis and skeletal development. It acts as a coreceptor for BMP ligands, particularly BMP2 and BMP4, facilitating their interactions with BMP type I receptors. It is required for ligand-induced recruitment of BMP receptors to lipid rafts. Binds to TGFBR2 and activates TGFB signaling. In lung cancer cells, could serve as an endogenous autocrine and paracrine ligand of TGFBR2, which could regulate TGFBR2 signaling and hence modulate epithelial-mesenchymal transition and cancer progression. The chain is Signal peptide, CUB and EGF-like domain-containing protein 3 from Homo sapiens (Human).